A 374-amino-acid polypeptide reads, in one-letter code: Wnt inhibitory factor 1 (374 aa).

An N-terminal signal peptide occupies residues 1–28 (MSLTGYFAAPLCSIFLFILAHADAGQQE). A WIF domain is found at 33–172 (MWIDAHQARV…PQNAIFFKTC (140 aa)). Asn83 carries an N-linked (GlcNAc...) asparagine glycan. Cystine bridges form between Cys135–Cys172, Cys177–Cys187, Cys181–Cys193, Cys195–Cys204, Cys209–Cys219, Cys213–Cys225, and Cys227–Cys236. EGF-like domains lie at 173–205 (QQAK…PHCE), 208–237 (LCMP…INCD), 237–269 (DKVN…EQCE), 270–301 (TSKC…DLCS), and 302–333 (KPVC…RYCN). A glycan (N-linked (GlcNAc...) asparagine) is linked at Asn240. Disulfide bonds link Cys241-Cys251, Cys245-Cys257, Cys259-Cys268, Cys273-Cys283, Cys277-Cys289, Cys291-Cys300, Cys305-Cys315, Cys309-Cys321, and Cys323-Cys332. The interval 343–374 (ALRPTGSRNRQHTPSPKRTEDRQALPESNYIW) is disordered. A compositionally biased stretch (polar residues) spans 348 to 358 (GSRNRQHTPSP).

In terms of tissue distribution, during somatogenesis, expressed predominantly in unsegmented paraxial presomitic mesoderm and, to a much lesser extent, in newly segmented somites.

It localises to the secreted. Binds to WNT proteins and inhibits their activities. May be involved in mesoderm segmentation. The protein is Wnt inhibitory factor 1 (wif1) of Xenopus laevis (African clawed frog).